We begin with the raw amino-acid sequence, 89 residues long: Small ribosomal subunit protein uS15 (89 aa).

This sequence belongs to the universal ribosomal protein uS15 family. As to quaternary structure, part of the 30S ribosomal subunit. Forms a bridge to the 50S subunit in the 70S ribosome, contacting the 23S rRNA.

Functionally, one of the primary rRNA binding proteins, it binds directly to 16S rRNA where it helps nucleate assembly of the platform of the 30S subunit by binding and bridging several RNA helices of the 16S rRNA. Forms an intersubunit bridge (bridge B4) with the 23S rRNA of the 50S subunit in the ribosome. This is Small ribosomal subunit protein uS15 from Corynebacterium diphtheriae (strain ATCC 700971 / NCTC 13129 / Biotype gravis).